The sequence spans 25 residues: Phospholipase A1 verutoxin-2a (25 aa).

Belongs to the AB hydrolase superfamily. Lipase family. Contains six disulfide bonds. In terms of tissue distribution, expressed by the venom gland.

The protein localises to the secreted. The enzyme catalyses a 1,2-diacyl-sn-glycero-3-phosphocholine + H2O = a 2-acyl-sn-glycero-3-phosphocholine + a fatty acid + H(+). The catalysed reaction is 1-(9Z-octadecenoyl)-2-hexadecanoyl-sn-glycero-3-phosphocholine + H2O = 2-hexadecanoyl-sn-glycero-3-phosphocholine + (9Z)-octadecenoate + H(+). It carries out the reaction a 1-acyl-sn-glycero-3-phosphocholine + H2O = sn-glycerol 3-phosphocholine + a fatty acid + H(+). It functions in the pathway phospholipid metabolism. Activity is maximal in the presence of calcium. However, unlike phospholipases A2 whose catalytic activity is strictly calcium-dependent, this enzyme shows considerable catalytic activity on phosphatidylcholine emulsified in calcium free solution; the catalytic activity of VT-2a assayed in the absence of calcium ions is 18-20% of that assayed in solution containing calcium ions. Catalyzes the hydrolysis of glycerophospholipids such as phosphatidylcholine (1,2-diacyl-sn-glycero-3-phosphocholine) and has a moderate activity to hydrolyze lysoglycerophospholipids such as lysophosphatidylcholine (1-acyl-sn-glycero-3-phosphocholine), but is unable to hydrolyze sphingomyelin. In addition to acting as an allergen, it possesses a potent hemolytic activity on red blood cells of mice (98.8% of hemolysis at 3.0 ug/ml). This chain is Phospholipase A1 verutoxin-2a, found in Vespa velutina (Asian yellow-legged hornet).